Consider the following 1043-residue polypeptide: Rho GTPase-activating protein gacZ (1043 aa).

A disordered region spans residues 1–44 (MTTTNTSIFGPRVNNSKFNNNNNNNNNNNNNNNNTSNNNNSNII). Residues 14–44 (NNSKFNNNNNNNNNNNNNNNNTSNNNNSNII) show a composition bias toward low complexity. Positions 71, 74, 82, 85, 91, 95, 103, and 107 each coordinate Zn(2+). The segment at 71–107 (CVICKSKNVQVCTGCLMVYYCGAEHQNIDWPNHKSLC) adopts an MYND-type; atypical zinc-finger fold. Disordered stretches follow at residues 137 to 163 (SGNR…NNNN), 199 to 532 (HLQQ…NNSN), 546 to 594 (DGLS…NGNR), 614 to 690 (FYQS…TNNN), 706 to 772 (NTSQ…QLSA), and 801 to 842 (NKVS…NNNN). The segment covering 201 to 225 (QQQIQQTQQTQQQPPPTTTSIPTQP) has biased composition (low complexity). Over residues 241–253 (SFKSSSSGDNTPI) the composition is skewed to polar residues. Composition is skewed to low complexity over residues 254–293 (NQSP…NMSG) and 307–411 (NSIN…TNEE). Residues 453-466 (GTLKQSSSSDSIYF) are compositionally biased toward polar residues. Low complexity-rich tracts occupy residues 467-532 (NNNN…NNSN) and 547-594 (GLSY…NGNR). Residues 615–625 (YQSNKNQSNGY) are compositionally biased toward polar residues. Positions 644-671 (ENDDSHEECDDDDDDDDGGGQDGDDGLD) are enriched in acidic residues. Composition is skewed to low complexity over residues 726–736 (DTQSQSTNSTT), 752–771 (SSDD…SQLS), 801–821 (NKVS…NNNN), and 829–842 (NNNN…NNNN). Residues 825–852 (DHNENNNNNNNNINNNNNNNNNNIENII) adopt a coiled-coil conformation. The 189-residue stretch at 855–1043 (IPLEEAVKKS…FGIQTYNYNS (189 aa)) folds into the Rho-GAP domain.

Its subcellular location is the cytoplasm. Functionally, rho GTPase-activating protein involved in the signal transduction pathway. In Dictyostelium discoideum (Social amoeba), this protein is Rho GTPase-activating protein gacZ (gacZ).